The primary structure comprises 1240 residues: Cohesin subunit SA-3 (1240 aa).

The segment covering 1-25 has biased composition (low complexity); that stretch reads MPTLWSPSTQHHGSSSGSESSPLQK. Residues 1 to 108 are disordered; the sequence is MPTLWSPSTQ…VSSGNGKNES (108 aa). Positions 97 to 108 are enriched in polar residues; sequence RIVSSGNGKNES. The SCD domain maps to 324–409; that stretch reads FVHRYRDILP…NRFKDRMVSM (86 aa). 2 disordered regions span residues 1077–1154 and 1213–1240; these read AEAS…PELI and DKMLHSPSSPSEHGLDLLDTTELNMEDF. Residues 1115–1125 are compositionally biased toward polar residues; that stretch reads GPTTPTLTSTA. Basic residues predominate over residues 1126-1141; the sequence is VKRKQSLRTVGKKQKG. At S1218 the chain carries Phosphoserine.

It belongs to the SCC3 family. In terms of assembly, component of the meiosis-specific cohesin complex, which also contains the SMC1 (SMC1A or SMC1B) and SMC3 heterodimer. Such complex likely contains RAD21, or the meiosis-specific related protein REC8. Interacts with CCDC79/TERB1; recruiting cohesin to telomeres to develop structural rigidity. In terms of processing, phosphorylated. Testis specific.

The protein resides in the nucleus. Its subcellular location is the chromosome. It localises to the centromere. Meiosis specific component of cohesin complex. The cohesin complex is required for the cohesion of sister chromatids after DNA replication. The cohesin complex apparently forms a large proteinaceous ring within which sister chromatids can be trapped. At anaphase, the complex is cleaved and dissociates from chromatin, allowing sister chromatids to segregate. The meiosis-specific cohesin complex probably replaces mitosis specific cohesin complex when it dissociates from chromatin during prophase I. The sequence is that of Cohesin subunit SA-3 (Stag3) from Mus musculus (Mouse).